The sequence spans 205 residues: Histidine biosynthesis bifunctional protein HisIE (205 aa).

The segment at 1-116 is phosphoribosyl-AMP cyclohydrolase; that stretch reads MLKLKFNEEG…KVEKPLPFEV (116 aa). The phosphoribosyl-ATP pyrophosphohydrolase stretch occupies residues 117-205; sequence LPRLQDVIRE…VMEELIRRFK (89 aa).

The protein in the N-terminal section; belongs to the PRA-CH family. It in the C-terminal section; belongs to the PRA-PH family.

The protein resides in the cytoplasm. It catalyses the reaction 1-(5-phospho-beta-D-ribosyl)-ATP + H2O = 1-(5-phospho-beta-D-ribosyl)-5'-AMP + diphosphate + H(+). The catalysed reaction is 1-(5-phospho-beta-D-ribosyl)-5'-AMP + H2O = 1-(5-phospho-beta-D-ribosyl)-5-[(5-phospho-beta-D-ribosylamino)methylideneamino]imidazole-4-carboxamide. Its pathway is amino-acid biosynthesis; L-histidine biosynthesis; L-histidine from 5-phospho-alpha-D-ribose 1-diphosphate: step 2/9. The protein operates within amino-acid biosynthesis; L-histidine biosynthesis; L-histidine from 5-phospho-alpha-D-ribose 1-diphosphate: step 3/9. The sequence is that of Histidine biosynthesis bifunctional protein HisIE (hisI) from Aquifex aeolicus (strain VF5).